The following is a 116-amino-acid chain: Large ribosomal subunit protein bL17 (116 aa).

This sequence belongs to the bacterial ribosomal protein bL17 family. As to quaternary structure, part of the 50S ribosomal subunit. Contacts protein L32.

The chain is Large ribosomal subunit protein bL17 from Chloroflexus aurantiacus (strain ATCC 29366 / DSM 635 / J-10-fl).